A 379-amino-acid chain; its full sequence is MKHLAVLGSTGSIGRQTLEIVRRYPSEFKIISMASYGNNLRLFFQQLEEFAPLAAAVYNEEVYNEACQRFPHMQFFLGQEGLTQLCIMDTVTTVVAASSGIEALPAILESMKKGKALALANKEILVCAGELVSKTAKENGIKVLPIDSEHNALYQCLEGRTIEGIKKLILTASGGPLLNKSLEELSCVTKQDVLNHPIWNMGSKVTVDSSTLVNKGLEIIEAYWLFGLENVEILAVIHPQSLIHGMVEFLDGSVISIMNPPDMLFPIQYALTAPERFASPRDGMDFSKKQTLEFFPVDEERFPSIRLAQQVLEKQGSSGSFFNAANEVLVRRFLCEEISWCDILRKLTTLMECHKVYACHSLEDILEVDGEARALAQEI.

NADPH-binding residues include Thr10, Gly11, Ser12, Ile13, Asn39, and Asn121. Residue Lys122 coordinates 1-deoxy-D-xylulose 5-phosphate. NADPH is bound at residue Glu123. Position 147 (Asp147) interacts with Mn(2+). 1-deoxy-D-xylulose 5-phosphate-binding residues include Ser148, Glu149, Ser173, and His196. Position 149 (Glu149) interacts with Mn(2+). Residue Gly202 participates in NADPH binding. 4 residues coordinate 1-deoxy-D-xylulose 5-phosphate: Ser209, Asn214, Lys215, and Glu218. Glu218 provides a ligand contact to Mn(2+).

Belongs to the DXR family. The cofactor is Mg(2+). It depends on Mn(2+) as a cofactor.

It catalyses the reaction 2-C-methyl-D-erythritol 4-phosphate + NADP(+) = 1-deoxy-D-xylulose 5-phosphate + NADPH + H(+). The protein operates within isoprenoid biosynthesis; isopentenyl diphosphate biosynthesis via DXP pathway; isopentenyl diphosphate from 1-deoxy-D-xylulose 5-phosphate: step 1/6. Catalyzes the NADPH-dependent rearrangement and reduction of 1-deoxy-D-xylulose-5-phosphate (DXP) to 2-C-methyl-D-erythritol 4-phosphate (MEP). This chain is 1-deoxy-D-xylulose 5-phosphate reductoisomerase, found in Chlamydia pneumoniae (Chlamydophila pneumoniae).